We begin with the raw amino-acid sequence, 345 residues long: Delta(6)-protoilludene synthase (345 aa).

Positions 84, 220, 224, and 228 each coordinate Mg(2+). A DDXXD motif motif is present at residues 84 to 88 (DEYSD). The (2E,6E)-farnesyl diphosphate site is built by R309 and Y310.

Belongs to the terpene synthase family. In terms of assembly, monomer. Requires Mg(2+) as cofactor.

The enzyme catalyses (2E,6E)-farnesyl diphosphate = Delta(6)-protoilludene + diphosphate. It participates in secondary metabolite biosynthesis. Its function is as follows. Delta(6)-protoilludene synthase, part of the gene cluster that mediates the biosynthesis of melleolides, a range of antifungal and phytotoxic polyketide derivatives composed of an orsellinic acid (OA) moiety esterified to various sesquiterpene alcohols. The first step in melleolides biosynthesis is performed by the delta(6)-protoilludene synthase PRO1 which catalyzes the cyclization of farnesyl diphosphate to protoilludene. The orsellinic acid synthase armB produces OA by condensing acetyl-CoA with 3 malonyl-CoA units in a three-round chain elongation reaction folowed by a C2-C7 ring closure. ArmB further catalyzes the trans-esterification of OA to the various sesquiterpene alcohols resulting from the hydroxylation of protoilludene. The melleolides cluster also includes 5 cytochrome P450 monooxygenases, 4 NAD(+)-dependent oxidoreductases, one flavin-dependent oxidoreductase, and one O-methyltransferase. The cytochrome P450 monooxygenases may be involved in protoilludene hydroxylation to elaborate melleolides with multiple alcohol groups, such as melleolide D, which carries alcohol functionalities at C-4, C-5, C-10, and C-13. The role of the NAD(+)-dependent enzymes remains unknown. Numerous melleolides, including arnamial, show 5'-O-methylation of the aromatic moiety which may be catalyzed by the methyltransferase encoded in the cluster. The flavin-dependent oxidoreductase might represent the dehydrogenase yielding the aldehyde in position 1 of arnamial and other melleolides. Finally, several halogenases, localized outside of the cluster, are able to catalyze the transfer of a single chlorine atom to the melleolide backbone, resulting in a 6'-chloromelleolide product. This is Delta(6)-protoilludene synthase from Armillaria gallica (Bulbous honey fungus).